Here is a 318-residue protein sequence, read N- to C-terminus: NADH-ubiquinone oxidoreductase chain 1 (318 aa).

Helical transmembrane passes span 2–22 (FLTN…FLTL), 36–56 (GPNI…IKLF), 69–89 (LLFT…WIPL), 100–120 (LGML…LWSG), 130–152 (IGAL…ILLH), 171–191 (HIWL…STLA), 217–237 (AGPF…MNAL), 254–273 (LYST…FLWI), and 294–314 (LPLT…LTSI).

It belongs to the complex I subunit 1 family.

The protein resides in the mitochondrion inner membrane. The enzyme catalyses a ubiquinone + NADH + 5 H(+)(in) = a ubiquinol + NAD(+) + 4 H(+)(out). Core subunit of the mitochondrial membrane respiratory chain NADH dehydrogenase (Complex I) that is believed to belong to the minimal assembly required for catalysis. Complex I functions in the transfer of electrons from NADH to the respiratory chain. The immediate electron acceptor for the enzyme is believed to be ubiquinone. The sequence is that of NADH-ubiquinone oxidoreductase chain 1 (MT-ND1) from Cyclopes didactylus (Silky anteater).